A 183-amino-acid polypeptide reads, in one-letter code: Peptide deformylase (183 aa).

Fe cation contacts are provided by cysteine 90 and histidine 132. Residue glutamate 133 is part of the active site. Histidine 136 serves as a coordination point for Fe cation.

The protein belongs to the polypeptide deformylase family. The cofactor is Fe(2+).

The enzyme catalyses N-terminal N-formyl-L-methionyl-[peptide] + H2O = N-terminal L-methionyl-[peptide] + formate. Its function is as follows. Removes the formyl group from the N-terminal Met of newly synthesized proteins. Requires at least a dipeptide for an efficient rate of reaction. N-terminal L-methionine is a prerequisite for activity but the enzyme has broad specificity at other positions. This Parafrankia sp. (strain EAN1pec) protein is Peptide deformylase.